The sequence spans 89 residues: Small ribosomal subunit protein uS15 (89 aa).

It belongs to the universal ribosomal protein uS15 family. Part of the 30S ribosomal subunit. Forms a bridge to the 50S subunit in the 70S ribosome, contacting the 23S rRNA.

In terms of biological role, one of the primary rRNA binding proteins, it binds directly to 16S rRNA where it helps nucleate assembly of the platform of the 30S subunit by binding and bridging several RNA helices of the 16S rRNA. Forms an intersubunit bridge (bridge B4) with the 23S rRNA of the 50S subunit in the ribosome. This is Small ribosomal subunit protein uS15 from Mycobacteroides abscessus (strain ATCC 19977 / DSM 44196 / CCUG 20993 / CIP 104536 / JCM 13569 / NCTC 13031 / TMC 1543 / L948) (Mycobacterium abscessus).